The chain runs to 63 residues: Large ribosomal subunit protein uL29 (63 aa).

It belongs to the universal ribosomal protein uL29 family.

The chain is Large ribosomal subunit protein uL29 from Psychromonas ingrahamii (strain DSM 17664 / CCUG 51855 / 37).